The primary structure comprises 417 residues: Pigment epithelium-derived factor (417 aa).

A signal peptide spans 1 to 19 (MQALVLLLWTGALLGHGSS). Residues 17 to 41 (GSSQNVPSSSEGSPVPDSTGEPVEE) form a disordered region. Positions 18-28 (SSQNVPSSSEG) are enriched in polar residues. Pyrrolidone carboxylic acid is present on Gln-20. Phosphoserine is present on Ser-24. An N-linked (GlcNAc...) asparagine glycan is attached at Asn-284.

Belongs to the serpin family. As to quaternary structure, interacts with PNPLA2; this interaction stimulates the phospholipase A2 activity of PNPLA2. As to expression, highly expressed in the liver, gastric glandular mucosa and renal tubules. It is also expressed in the brain, heart, lung retina and testes.

The protein resides in the secreted. It localises to the melanosome. Its function is as follows. Neurotrophic protein; induces extensive neuronal differentiation in retinoblastoma cells. Potent inhibitor of angiogenesis. As it does not undergo the S (stressed) to R (relaxed) conformational transition characteristic of active serpins, it exhibits no serine protease inhibitory activity. This Mus musculus (Mouse) protein is Pigment epithelium-derived factor (Serpinf1).